Here is a 360-residue protein sequence, read N- to C-terminus: NADH-quinone oxidoreductase subunit H (360 aa).

8 consecutive transmembrane segments (helical) span residues 20–40, 95–115, 130–150, 176–196, 206–226, 261–281, 297–317, and 336–356; these read GMVW…IPLM, GLFV…WVVI, LLLV…AGWA, FCLL…IVLA, GIGF…VYLI, IFFL…ALMF, IPGW…FIWI, and IFIP…LSPW.

The protein belongs to the complex I subunit 1 family. As to quaternary structure, NDH-1 is composed of 14 different subunits. Subunits NuoA, H, J, K, L, M, N constitute the membrane sector of the complex.

It localises to the cell inner membrane. It carries out the reaction a quinone + NADH + 5 H(+)(in) = a quinol + NAD(+) + 4 H(+)(out). Functionally, NDH-1 shuttles electrons from NADH, via FMN and iron-sulfur (Fe-S) centers, to quinones in the respiratory chain. The immediate electron acceptor for the enzyme in this species is believed to be ubiquinone. Couples the redox reaction to proton translocation (for every two electrons transferred, four hydrogen ions are translocated across the cytoplasmic membrane), and thus conserves the redox energy in a proton gradient. This subunit may bind ubiquinone. In Verminephrobacter eiseniae (strain EF01-2), this protein is NADH-quinone oxidoreductase subunit H.